Here is a 974-residue protein sequence, read N- to C-terminus: Valine--tRNA ligase, chloroplastic/mitochondrial 2 (974 aa).

The 'HIGH' region motif lies at proline 109–histidine 119. The stretch at leucine 432 to lysine 454 is one LRR 1 repeat. Residues glutamate 489–aspartate 518 adopt a coiled-coil conformation. Positions lysine 598–serine 602 match the 'KMSKS' region motif. Lysine 601 lines the ATP pocket. An LRR 2 repeat occupies leucine 857–leucine 880.

Belongs to the class-I aminoacyl-tRNA synthetase family.

The protein resides in the plastid. Its subcellular location is the chloroplast. It is found in the mitochondrion. It carries out the reaction tRNA(Val) + L-valine + ATP = L-valyl-tRNA(Val) + AMP + diphosphate. This chain is Valine--tRNA ligase, chloroplastic/mitochondrial 2, found in Arabidopsis thaliana (Mouse-ear cress).